We begin with the raw amino-acid sequence, 317 residues long: Melanocyte-stimulating hormone receptor (317 aa).

The Extracellular portion of the chain corresponds to 1 to 37; sequence MPIHGAPRKLLGSLNSTPTATPKLGLAANHTGAPCLE. Asn29 carries N-linked (GlcNAc...) asparagine glycosylation. A helical membrane pass occupies residues 38–63; it reads VSIPDGLFLSLGLVSLVENVLVVAAI. The Cytoplasmic portion of the chain corresponds to 64-72; it reads AKNRNLHSP. A helical membrane pass occupies residues 73–93; the sequence is MYCFICCLALSDLLVSGSNML. Over 94 to 118 the chain is Extracellular; sequence EMAVVLLLEGGALATRASVVQQLHN. The helical transmembrane segment at 119–140 threads the bilayer; the sequence is TIDVLTCSSMLCSLCFLGAIAV. At 141 to 163 the chain is on the cytoplasmic side; it reads DRHISIFYALRYHSIMTLPRAQR. Residues 164–183 traverse the membrane as a helical segment; it reads VIAAIWVASILSSTLFITYY. The Extracellular segment spans residues 184–191; it reads DHAAVLLC. A helical transmembrane segment spans residues 192-211; the sequence is LVVFFLAMLVLMAVLYVHML. Residues 212 to 240 lie on the Cytoplasmic side of the membrane; it reads ARACQHAQGITRLHKRQPPAHQGFGLRGA. A helical membrane pass occupies residues 241–266; it reads ATLTILLGIFFLCWGPFFLHLKLVVF. Topologically, residues 267–279 are extracellular; sequence CPQHLTCSCIFKN. The helical transmembrane segment at 280 to 300 threads the bilayer; that stretch reads FKVFLTLIICNTIIDPLIYAF. Residues 301-317 are Cytoplasmic-facing; the sequence is RSQELRRTLKEVLLCSW. Cys315 carries S-palmitoyl cysteine lipidation.

It belongs to the G-protein coupled receptor 1 family. In terms of assembly, interacts with MGRN1, but does not undergo MGRN1-mediated ubiquitination; this interaction competes with GNAS-binding and thus inhibits agonist-induced cAMP production. Interacts with OPN3; the interaction results in a decrease in MC1R-mediated cAMP signaling and ultimately a decrease in melanin production in melanocytes.

Its subcellular location is the cell membrane. Its function is as follows. Receptor for MSH (alpha, beta and gamma) and ACTH. The activity of this receptor is mediated by G proteins which activate adenylate cyclase. Mediates melanogenesis, the production of eumelanin (black/brown) and phaeomelanin (red/yellow), via regulation of cAMP signaling in melanocytes. In Saimiri oerstedii (Central American squirrel monkey), this protein is Melanocyte-stimulating hormone receptor (MC1R).